A 132-amino-acid polypeptide reads, in one-letter code: D-ribose pyranase (132 aa).

His-20 serves as the catalytic Proton donor. Substrate is bound by residues Asp-28, His-98, and 121-123 (YSN).

The protein belongs to the RbsD / FucU family. RbsD subfamily. As to quaternary structure, homodecamer.

The protein resides in the cytoplasm. The enzyme catalyses beta-D-ribopyranose = beta-D-ribofuranose. It participates in carbohydrate metabolism; D-ribose degradation; D-ribose 5-phosphate from beta-D-ribopyranose: step 1/2. Functionally, catalyzes the interconversion of beta-pyran and beta-furan forms of D-ribose. The sequence is that of D-ribose pyranase from Kosmotoga olearia (strain ATCC BAA-1733 / DSM 21960 / TBF 19.5.1).